Reading from the N-terminus, the 264-residue chain is MSIRLQEAGLRHGQVQALNNVDLQIGKGERVAIIGPSGAGKSSLLHLMATAVRPSAGQLDLLGEQPWLLTSGARQRLRARVGLVHQAPPLPPRQRVVTAVLAGRLGQWGTLRGLLNLIHPSDVPGAREVLAELGMVDKLFVQCGQLSGGQLQRVGIARALYQQPEVLLTDEPVSAMDPVLADHSLALLNRHAQAHGVTLVASLHAVELALAHFPRIIGIRAGEVAFDCPAEAVTPTMLDALYANEQLGSPVVPTATVLVQIPRC.

Positions 3–246 (IRLQEAGLRH…MLDALYANEQ (244 aa)) constitute an ABC transporter domain. Position 35 to 42 (35 to 42 (GPSGAGKS)) interacts with ATP.

The protein belongs to the ABC transporter superfamily. Phosphonates importer (TC 3.A.1.9.1) family. The complex is composed of two ATP-binding proteins (PhnC), two transmembrane proteins (PhnE) and a solute-binding protein (PhnD).

The protein resides in the cell inner membrane. It catalyses the reaction phosphonate(out) + ATP + H2O = phosphonate(in) + ADP + phosphate + H(+). In terms of biological role, part of the ABC transporter complex PhnCDE involved in phosphonates import. Responsible for energy coupling to the transport system. This is Phosphonates import ATP-binding protein PhnC from Pseudomonas entomophila (strain L48).